We begin with the raw amino-acid sequence, 427 residues long: Serine--tRNA ligase (427 aa).

231-233 contributes to the L-serine binding site; sequence TAE. ATP is bound at residue 262 to 264; it reads RSE. Position 285 (E285) interacts with L-serine. 349–352 is an ATP binding site; the sequence is EISS. S385 is an L-serine binding site.

This sequence belongs to the class-II aminoacyl-tRNA synthetase family. Type-1 seryl-tRNA synthetase subfamily. As to quaternary structure, homodimer. The tRNA molecule binds across the dimer.

The protein localises to the cytoplasm. It catalyses the reaction tRNA(Ser) + L-serine + ATP = L-seryl-tRNA(Ser) + AMP + diphosphate + H(+). The enzyme catalyses tRNA(Sec) + L-serine + ATP = L-seryl-tRNA(Sec) + AMP + diphosphate + H(+). It participates in aminoacyl-tRNA biosynthesis; selenocysteinyl-tRNA(Sec) biosynthesis; L-seryl-tRNA(Sec) from L-serine and tRNA(Sec): step 1/1. Catalyzes the attachment of serine to tRNA(Ser). Is also able to aminoacylate tRNA(Sec) with serine, to form the misacylated tRNA L-seryl-tRNA(Sec), which will be further converted into selenocysteinyl-tRNA(Sec). The protein is Serine--tRNA ligase of Sinorhizobium fredii (strain NBRC 101917 / NGR234).